The sequence spans 311 residues: Dermonecrotic toxin (311 aa).

The signal sequence occupies residues 1–21 (MYVHLALILGCWTVVLQGAET). The propeptide occupies 22 to 26 (DVGER). H38 is a catalytic residue. 2 residues coordinate Mg(2+): E58 and D60. The Nucleophile role is filled by H73. C77 and C83 form a disulfide bridge. Residue D117 coordinates Mg(2+).

It belongs to the arthropod phospholipase D family. Class I subfamily. Requires Mg(2+) as cofactor. In terms of tissue distribution, expressed by the venom gland.

The protein localises to the secreted. It catalyses the reaction an N-(acyl)-sphingosylphosphocholine = an N-(acyl)-sphingosyl-1,3-cyclic phosphate + choline. It carries out the reaction an N-(acyl)-sphingosylphosphoethanolamine = an N-(acyl)-sphingosyl-1,3-cyclic phosphate + ethanolamine. The catalysed reaction is a 1-acyl-sn-glycero-3-phosphocholine = a 1-acyl-sn-glycero-2,3-cyclic phosphate + choline. The enzyme catalyses a 1-acyl-sn-glycero-3-phosphoethanolamine = a 1-acyl-sn-glycero-2,3-cyclic phosphate + ethanolamine. Catalytic activity and hemolysis are inhibited by divalent ion chelators (1,10-phenanthroline, EDTA, and EGTA). In terms of biological role, dermonecrotic toxins cleave the phosphodiester linkage between the phosphate and headgroup of certain phospholipids (sphingolipid and lysolipid substrates), forming an alcohol (often choline) and a cyclic phosphate. This toxin acts on sphingomyelin (SM). It may also act on ceramide phosphoethanolamine (CPE), lysophosphatidylcholine (LPC) and lysophosphatidylethanolamine (LPE), but not on lysophosphatidylserine (LPS), and lysophosphatidylglycerol (LPG). It acts by transphosphatidylation, releasing exclusively cyclic phosphate products as second products. Shows complement-dependent hemolysis. Also induces dermonecrosis, vascular permeability, edema, inflammatory response, and platelet aggregation. This Loxosceles laeta (South American recluse spider) protein is Dermonecrotic toxin.